The following is a 277-amino-acid chain: MPELPEVETVMRGFRDAFEGHRISHVTVNRPDLRWPFPADLREKLEGHHVLSFRRRAKYILVRLEGGWSMLLHLGMSGRLTIGRAGTNATPPAHEHLVLETDSGARAGLVDPRRFGMVDLVRTSEEDSHRLLAHLGMEPLSDAMTGPALAELFRGRRSPIKSALLDQKLIAGLGNIYVCEALFRCGIHPERQACTLTGEETAALAEAIPQILEQAIASGGSSLRDYVQADGTKGAFQDLHLVYGREGVPCPNCGAEHPIQRITQAGRSTFFCPTCQK.

Proline 2 (schiff-base intermediate with DNA) is an active-site residue. The active-site Proton donor is glutamate 3. Lysine 58 functions as the Proton donor; for beta-elimination activity in the catalytic mechanism. DNA-binding residues include histidine 94, arginine 113, and arginine 156. The segment at 241–277 adopts an FPG-type zinc-finger fold; that stretch reads LVYGREGVPCPNCGAEHPIQRITQAGRSTFFCPTCQK. The active-site Proton donor; for delta-elimination activity is the arginine 267.

The protein belongs to the FPG family. As to quaternary structure, monomer. It depends on Zn(2+) as a cofactor.

It catalyses the reaction Hydrolysis of DNA containing ring-opened 7-methylguanine residues, releasing 2,6-diamino-4-hydroxy-5-(N-methyl)formamidopyrimidine.. The catalysed reaction is 2'-deoxyribonucleotide-(2'-deoxyribose 5'-phosphate)-2'-deoxyribonucleotide-DNA = a 3'-end 2'-deoxyribonucleotide-(2,3-dehydro-2,3-deoxyribose 5'-phosphate)-DNA + a 5'-end 5'-phospho-2'-deoxyribonucleoside-DNA + H(+). In terms of biological role, involved in base excision repair of DNA damaged by oxidation or by mutagenic agents. Acts as a DNA glycosylase that recognizes and removes damaged bases. Has a preference for oxidized purines, such as 7,8-dihydro-8-oxoguanine (8-oxoG). Has AP (apurinic/apyrimidinic) lyase activity and introduces nicks in the DNA strand. Cleaves the DNA backbone by beta-delta elimination to generate a single-strand break at the site of the removed base with both 3'- and 5'-phosphates. This chain is Formamidopyrimidine-DNA glycosylase, found in Gluconobacter oxydans (strain 621H) (Gluconobacter suboxydans).